We begin with the raw amino-acid sequence, 507 residues long: 2,3-bisphosphoglycerate-independent phosphoglycerate mutase (507 aa).

Residues Asp11 and Ser61 each contribute to the Mn(2+) site. Ser61 functions as the Phosphoserine intermediate in the catalytic mechanism. Substrate contacts are provided by residues His122, 150–151 (RD), Arg182, Arg188, 257–260 (RPDR), and Lys332. Mn(2+)-binding residues include Asp397, His401, Asp438, His439, and His456.

It belongs to the BPG-independent phosphoglycerate mutase family. Monomer. Requires Mn(2+) as cofactor.

It carries out the reaction (2R)-2-phosphoglycerate = (2R)-3-phosphoglycerate. It participates in carbohydrate degradation; glycolysis; pyruvate from D-glyceraldehyde 3-phosphate: step 3/5. Catalyzes the interconversion of 2-phosphoglycerate and 3-phosphoglycerate. This is 2,3-bisphosphoglycerate-independent phosphoglycerate mutase from Mycoplasma genitalium (strain ATCC 33530 / DSM 19775 / NCTC 10195 / G37) (Mycoplasmoides genitalium).